A 278-amino-acid chain; its full sequence is Delta(3,5)-Delta(2,4)-dienoyl-CoA isomerase, peroxisomal (278 aa).

N-acetylmethionine is present on Met-1. Residues 69–73 (SGIDL) and Gly-128 contribute to the substrate site. A Microbody targeting signal motif is present at residues 276-278 (AKL).

This sequence belongs to the enoyl-CoA hydratase/isomerase family. In terms of tissue distribution, expressed in roots, leaves, stems and flowers.

The protein localises to the peroxisome. It catalyses the reaction a (3E,5Z)-dienoyl-CoA = a (2E,4E)-(5,6-saturated)-dienoyl-CoA. The protein operates within lipid metabolism; fatty acid beta-oxidation. In terms of biological role, converts 3,5-dienoyl-CoAs to the corresponding 2,4-dienoyl-CoAs. Involved in degradation of unsaturated fatty acids. This chain is Delta(3,5)-Delta(2,4)-dienoyl-CoA isomerase, peroxisomal, found in Arabidopsis thaliana (Mouse-ear cress).